A 282-amino-acid chain; its full sequence is Small ribosomal subunit protein uS3 (282 aa).

Positions 43–111 (IRQLMSTGME…QVQLNILEVK (69 aa)) constitute a KH type-2 domain. A disordered region spans residues 218-282 (QQAASAPSRG…AAVATEGSDA (65 aa)). Over residues 230 to 262 (PRRDGDDRGPRRENSGPRRDGGNLRSQRNDRNE) the composition is skewed to basic and acidic residues. Positions 263-276 (NAAVEAAPAAAAVA) are enriched in low complexity.

The protein belongs to the universal ribosomal protein uS3 family. Part of the 30S ribosomal subunit. Forms a tight complex with proteins S10 and S14.

In terms of biological role, binds the lower part of the 30S subunit head. Binds mRNA in the 70S ribosome, positioning it for translation. The sequence is that of Small ribosomal subunit protein uS3 from Renibacterium salmoninarum (strain ATCC 33209 / DSM 20767 / JCM 11484 / NBRC 15589 / NCIMB 2235).